The chain runs to 271 residues: Formamidopyrimidine-DNA glycosylase (271 aa).

Pro2 functions as the Schiff-base intermediate with DNA in the catalytic mechanism. Glu3 serves as the catalytic Proton donor. Residue Lys57 is the Proton donor; for beta-elimination activity of the active site. His90, Arg109, and Lys151 together coordinate DNA. The segment at 236–270 (HVYGRGGDTCTHCGQLLSEIRLGQRATVFCSICQQ) adopts an FPG-type zinc-finger fold. The active-site Proton donor; for delta-elimination activity is Arg260.

This sequence belongs to the FPG family. Monomer. The cofactor is Zn(2+).

It catalyses the reaction Hydrolysis of DNA containing ring-opened 7-methylguanine residues, releasing 2,6-diamino-4-hydroxy-5-(N-methyl)formamidopyrimidine.. It carries out the reaction 2'-deoxyribonucleotide-(2'-deoxyribose 5'-phosphate)-2'-deoxyribonucleotide-DNA = a 3'-end 2'-deoxyribonucleotide-(2,3-dehydro-2,3-deoxyribose 5'-phosphate)-DNA + a 5'-end 5'-phospho-2'-deoxyribonucleoside-DNA + H(+). Its function is as follows. Involved in base excision repair of DNA damaged by oxidation or by mutagenic agents. Acts as a DNA glycosylase that recognizes and removes damaged bases. Has a preference for oxidized purines, such as 7,8-dihydro-8-oxoguanine (8-oxoG). Has AP (apurinic/apyrimidinic) lyase activity and introduces nicks in the DNA strand. Cleaves the DNA backbone by beta-delta elimination to generate a single-strand break at the site of the removed base with both 3'- and 5'-phosphates. This Shewanella piezotolerans (strain WP3 / JCM 13877) protein is Formamidopyrimidine-DNA glycosylase.